Consider the following 356-residue polypeptide: Transcription factor MafB (356 aa).

2 disordered regions span residues 49 to 79 (RLQPQGSVSSTPISTPCSSVPSSPSFSPTEQ) and 140 to 240 (YRGA…LNVE). A compositionally biased stretch (low complexity) spans 55–77 (SVSSTPISTPCSSVPSSPSFSPT). Composition is skewed to basic residues over residues 183–196 (AHGHHPHHHHHHHH) and 212–223 (HHRHHHHHHPHG). Residues 270-295 (RLKQKRRTLKNRGYAQSCRFKRVQQK) are basic motif. A bZIP domain is found at 270-333 (RLKQKRRTLK…DAYKLKCEKL (64 aa)). A leucine-zipper region spans residues 298 to 319 (LENEKTQLINQVEQLKQEINRL).

The protein belongs to the bZIP family. Maf subfamily. As to quaternary structure, homodimer or heterodimer with other bHLH-Zip transcription factors. Binds DNA as a homodimer or a heterodimer.

It is found in the nucleus. May act as a transcriptional activator or repressor. Involved in neurogenesis. Involved in the development of rhombomeres (r) 5 and 6 segments from their common precursor 'proto-segment' in the hindbrain. The chain is Transcription factor MafB (mafb) from Danio rerio (Zebrafish).